The chain runs to 94 residues: Protein RnfH (94 aa).

This sequence belongs to the UPF0125 (RnfH) family.

The sequence is that of Protein RnfH from Serratia proteamaculans (strain 568).